A 218-amino-acid polypeptide reads, in one-letter code: Peptide methionine sulfoxide reductase MsrA (218 aa).

Cys57 is a catalytic residue.

Belongs to the MsrA Met sulfoxide reductase family.

The catalysed reaction is L-methionyl-[protein] + [thioredoxin]-disulfide + H2O = L-methionyl-(S)-S-oxide-[protein] + [thioredoxin]-dithiol. The enzyme catalyses [thioredoxin]-disulfide + L-methionine + H2O = L-methionine (S)-S-oxide + [thioredoxin]-dithiol. Functionally, has an important function as a repair enzyme for proteins that have been inactivated by oxidation. Catalyzes the reversible oxidation-reduction of methionine sulfoxide in proteins to methionine. The sequence is that of Peptide methionine sulfoxide reductase MsrA from Brucella anthropi (Ochrobactrum anthropi).